Here is a 648-residue protein sequence, read N- to C-terminus: Biosynthetic arginine decarboxylase (648 aa).

Lys109 carries the N6-(pyridoxal phosphate)lysine modification. 291–301 (LDVGGGLGVDY) is a substrate binding site.

It belongs to the Orn/Lys/Arg decarboxylase class-II family. SpeA subfamily. Mg(2+) serves as cofactor. Pyridoxal 5'-phosphate is required as a cofactor.

It catalyses the reaction L-arginine + H(+) = agmatine + CO2. Catalyzes the biosynthesis of agmatine from arginine. This chain is Biosynthetic arginine decarboxylase, found in Prochlorococcus marinus (strain SARG / CCMP1375 / SS120).